The sequence spans 861 residues: DNA mismatch repair protein MutS (861 aa).

618-625 (GPNMGGKS) serves as a coordination point for ATP.

This sequence belongs to the DNA mismatch repair MutS family.

Its function is as follows. This protein is involved in the repair of mismatches in DNA. It is possible that it carries out the mismatch recognition step. This protein has a weak ATPase activity. This is DNA mismatch repair protein MutS from Shewanella frigidimarina (strain NCIMB 400).